A 506-amino-acid polypeptide reads, in one-letter code: Voltage-gated potassium channel regulatory subunit KCNG4 (506 aa).

The Cytoplasmic portion of the chain corresponds to methionine 1–leucine 216. The helical transmembrane segment at proline 217–valine 238 threads the bilayer. Topologically, residues serine 239–tyrosine 259 are extracellular. The chain crosses the membrane as a helical span at residues isoleucine 260 to glutamine 281. The Cytoplasmic portion of the chain corresponds to alanine 282–proline 292. Residues leucine 293–aspartate 312 form a helical membrane-spanning segment. The Extracellular segment spans residues glutamate 313–tyrosine 326. The helical; Voltage-sensor transmembrane segment at leucine 327–histidine 351 threads the bilayer. The Cytoplasmic segment spans residues serine 352 to alanine 366. A helical transmembrane segment spans residues arginine 367–tyrosine 388. Topologically, residues valine 389–isoleucine 403 are extracellular. The helical intramembrane region spans proline 404–threonine 415. Residues threonine 416–aspartate 421 carry the Selectivity filter motif. Residues threonine 416 to valine 423 lie within the membrane without spanning it. The Extracellular segment spans residues proline 424–glutamine 430. The chain crosses the membrane as a helical span at residues methionine 431 to tyrosine 459. Topologically, residues leucine 460–methionine 506 are cytoplasmic.

This sequence belongs to the potassium channel family. G (TC 1.A.1.2) subfamily. Kv6.4/KCNG4 sub-subfamily. Heterotetramer with KCNB1. Does not form homomultimer.

Its subcellular location is the cell membrane. Its function is as follows. Regulatory subunit of the voltage-gated potassium (Kv) channel which, when coassembled with KCNB1, modulates the kinetics parameters of the heterotetrameric channel namely the time course of activation, deactivation and inactivation and on the voltage-dependence of activation. Potassium channel subunit that does not form functional channels by itself. Reduces the deactivation rate. Modulates the threshold for activation by shifting by approximately 20 mV in hyperpolarizing direction. Markedly changes the inactivation by shifting the voltage dependence of inactivation by approximately 40 mV in hyperpolarizing direction. Acceleratee activation and enhances the time course of activation. The chain is Voltage-gated potassium channel regulatory subunit KCNG4 from Mus musculus (Mouse).